The chain runs to 158 residues: UPF0225 protein Pfl01_1218 (158 aa).

Belongs to the UPF0225 family.

The protein is UPF0225 protein Pfl01_1218 of Pseudomonas fluorescens (strain Pf0-1).